Here is a 348-residue protein sequence, read N- to C-terminus: MKLSSFKFTLPSKLIASHPVENREDARLMVVHKRTGQIEHKTFKDLIDYLGENDTLVLNDAKIFPSKLYGSKEKTGAQIEVFLLRELESGEHLWDTLVEPARKIRVGNKLYFGDGELVAEVLDNTTSRGRTLKFLFEGTREEFYEIVDQLGFVPLPNQLKRKPETEDRERYQTVYAQHIGAVVPPFAGLHFSAHLLKRLELKGVHITPLTLHIGLNSMKIIDVEDLTKYRIGSEQFLIPDNTVTTVNTALDDKKQVCAVGTSTIKALETSVSVAGRLKPAQGWTNKLIFPPYDFKVCTSLITNFHLPESLPLVNAAAFGGYELMMEAYQIAIKEKYRFFVYGDAMLII.

It belongs to the QueA family. In terms of assembly, monomer.

The protein resides in the cytoplasm. It catalyses the reaction 7-aminomethyl-7-carbaguanosine(34) in tRNA + S-adenosyl-L-methionine = epoxyqueuosine(34) in tRNA + adenine + L-methionine + 2 H(+). It participates in tRNA modification; tRNA-queuosine biosynthesis. Functionally, transfers and isomerizes the ribose moiety from AdoMet to the 7-aminomethyl group of 7-deazaguanine (preQ1-tRNA) to give epoxyqueuosine (oQ-tRNA). The chain is S-adenosylmethionine:tRNA ribosyltransferase-isomerase from Amoebophilus asiaticus (strain 5a2).